Here is a 327-residue protein sequence, read N- to C-terminus: Malate dehydrogenase (327 aa).

NAD(+) is bound at residue 12-18 (GAAGQIC). 2 residues coordinate substrate: R92 and R98. NAD(+)-binding positions include N105, Q112, and 129–131 (TGN). Substrate-binding residues include N131 and R162. Catalysis depends on H187, which acts as the Proton acceptor.

This sequence belongs to the LDH/MDH superfamily. MDH type 2 family.

It catalyses the reaction (S)-malate + NAD(+) = oxaloacetate + NADH + H(+). Functionally, catalyzes the reversible oxidation of malate to oxaloacetate. This is Malate dehydrogenase from Cutibacterium acnes (strain DSM 16379 / KPA171202) (Propionibacterium acnes).